The primary structure comprises 1024 residues: NLR family CARD domain-containing protein 4 (1024 aa).

Residues 1–88 (MNFIRNNRRA…FVYQDLTGQN (88 aa)) form the CARD domain. Residues 95 to 298 (EEDLNVLAQN…HVGALTAEVG (204 aa)) form a nucleotide-binding domain (NBD) region. ATP is bound by residues T135, 172–177 (GKGKST), and H443. Residues 163–476 (SPCLIEGESG…VSKGNSYLNK (314 aa)) form the NACHT domain. Residues 356–463 (AHTQTMLFQT…RLSSLLTSKE (108 aa)) form a winged-helix domain (WHD) region. At S533 the chain carries Phosphoserine. LRR repeat units follow at residues 578-598 (FFQG…LFDF), 656-679 (KQEF…DIKY), 735-758 (VTGL…LIDS), 762-785 (LKNL…NLAE), 787-812 (LRSL…DYIV), 824-847 (EMKL…LHNL), 848-870 (IKLS…ALQE), 878-902 (LGEL…LLKQ), 911-933 (KLGL…FLEM), 936-963 (LRDL…VFEN), 965-985 (KQLV…ALVR), and 999-1021 (EVKL…TFKL).

In terms of assembly, homooligomer; homooligomerizes following activation of Naip proteins by pathogenic proteins such as S.typhimurium (Salmonella) flagellin or PrgJ. Component of the NLRC4 inflammasome, at least composed of NLRC4, caspase-1 (CASP1) and some NAIP protein (Naip, Naip2 or Naip5). Interacts with Naip5 and Naip6; following Naip5 and Naip6 engagement by Salmonella flagellin. Interacts with Naip2; following Naip2 engagement by Salmonella PrgJ. The inflammasome is a huge complex that contains multiple copies of NLRC4 and a single Naip protein chain. Some NLRC4 inflammasomes contain PYCARD/ASC, while some others directly contact and activate CASP1. Interacts with EIF2AK2/PKR. Phosphorylated at Ser-533 following infection of macrophages with S.typhimurium (Salmonella). Phosphorylation is essential for NLRC4 inflammasome function to promote caspase-1 activation and pyroptosis. PRKCD phosphorylates Ser-533 in vitro. Expressed by intestinal mononuclear phagocytes.

Its subcellular location is the cytoplasm. It localises to the cytosol. The protein resides in the inflammasome. Its function is as follows. Key component of inflammasomes that indirectly senses specific proteins from pathogenic bacteria and fungi and responds by assembling an inflammasome complex that promotes caspase-1 activation, cytokine production and macrophage pyroptosis. The NLRC4 inflammasome is activated as part of the innate immune response to a range of intracellular bacteria. It senses pathogenic proteins of the type III secretion system (T3SS) and type IV secretion system (T4SS) such as flagellin and PrgJ-like rod proteins via the Naip proteins (Naip1, Naip2 or Naip5): specific Naip proteins recognize and bind pathogenic proteins, driving assembly and activation of the NLRC4 inflammasome. The NLRC4 inflammasome senses Gram-negative bacteria such as L.pneumophila and P.aeruginosa, enteric pathogens S.typhimurium (Salmonella) and S.flexneri and fungal pathogen C.albicans. In intestine, the NLRC4 inflammasome is able to discriminate between commensal and pathogenic bacteria and specifically drives production of interleukin-1 beta (IL1B) in response to infection by Salmonella or P.aeruginosa. In case of L.pneumophila infection the inflammasome acts by activating caspase-7. The sequence is that of NLR family CARD domain-containing protein 4 (Nlrc4) from Mus musculus (Mouse).